Consider the following 540-residue polypeptide: Chaperonin GroEL (540 aa).

ATP is bound by residues 30-33 (TLGP), Lys51, 87-91 (DGTTT), Gly415, and Asp496.

This sequence belongs to the chaperonin (HSP60) family. Forms a cylinder of 14 subunits composed of two heptameric rings stacked back-to-back. Interacts with the co-chaperonin GroES.

It localises to the cytoplasm. It carries out the reaction ATP + H2O + a folded polypeptide = ADP + phosphate + an unfolded polypeptide.. Its function is as follows. Together with its co-chaperonin GroES, plays an essential role in assisting protein folding. The GroEL-GroES system forms a nano-cage that allows encapsulation of the non-native substrate proteins and provides a physical environment optimized to promote and accelerate protein folding. This is Chaperonin GroEL from Thermodesulfovibrio yellowstonii (strain ATCC 51303 / DSM 11347 / YP87).